Reading from the N-terminus, the 1035-residue chain is Isoleucine--tRNA ligase (1035 aa).

The 'HIGH' region signature appears at 48–58 (PTANGRPHVGH). The short motif at 589–593 (KMSKH) is the 'KMSKS' region element. Lysine 592 serves as a coordination point for ATP.

This sequence belongs to the class-I aminoacyl-tRNA synthetase family. IleS type 2 subfamily. Monomer. Zn(2+) serves as cofactor.

The protein localises to the cytoplasm. The enzyme catalyses tRNA(Ile) + L-isoleucine + ATP = L-isoleucyl-tRNA(Ile) + AMP + diphosphate. Functionally, catalyzes the attachment of isoleucine to tRNA(Ile). As IleRS can inadvertently accommodate and process structurally similar amino acids such as valine, to avoid such errors it has two additional distinct tRNA(Ile)-dependent editing activities. One activity is designated as 'pretransfer' editing and involves the hydrolysis of activated Val-AMP. The other activity is designated 'posttransfer' editing and involves deacylation of mischarged Val-tRNA(Ile). This is Isoleucine--tRNA ligase from Clostridium acetobutylicum (strain ATCC 824 / DSM 792 / JCM 1419 / IAM 19013 / LMG 5710 / NBRC 13948 / NRRL B-527 / VKM B-1787 / 2291 / W).